Reading from the N-terminus, the 115-residue chain is Prefoldin subunit beta (115 aa).

Belongs to the prefoldin subunit beta family. As to quaternary structure, heterohexamer of two alpha and four beta subunits.

The protein resides in the cytoplasm. Its function is as follows. Molecular chaperone capable of stabilizing a range of proteins. Seems to fulfill an ATP-independent, HSP70-like function in archaeal de novo protein folding. The polypeptide is Prefoldin subunit beta (Methanococcus aeolicus (strain ATCC BAA-1280 / DSM 17508 / OCM 812 / Nankai-3)).